Here is a 357-residue protein sequence, read N- to C-terminus: Peptide chain release factor 1 (357 aa).

At Gln-234 the chain carries N5-methylglutamine. Residues 249–308 (PSGVEVSCQDEKSQHKNRSKAMRVLRSRVYEKKREEQQAEREEARRSMVGSGDRSAKIRT) form a disordered region. Positions 263-274 (HKNRSKAMRVLR) are enriched in basic residues. The span at 276 to 294 (RVYEKKREEQQAEREEARR) shows a compositional bias: basic and acidic residues.

The protein belongs to the prokaryotic/mitochondrial release factor family. In terms of processing, methylated by PrmC. Methylation increases the termination efficiency of RF1.

The protein resides in the cytoplasm. In terms of biological role, peptide chain release factor 1 directs the termination of translation in response to the peptide chain termination codons UAG and UAA. In Salinibacter ruber (strain DSM 13855 / M31), this protein is Peptide chain release factor 1.